A 307-amino-acid chain; its full sequence is Protein pid-3 (307 aa).

Component of the pid-1 variant of the PETISCO complex (also called the pid-3, erh-2, tofu-6, and ife-3 small RNA complex) containing at least pid-1, tofu-6, ife-3, pid-3, and erh-2, which is required for the biogenesis of a class of 21 nucleotide PIWI-interacting RNAs (piRNAs) that possess a uracil residue at the 5'-end (also called 21U-RNAs). Within the complex interacts with pid-1; the interaction is direct. Component of the tost-1 variant of the PETISCO complex (also called the pid-3, erh-2, tofu-6, and ife-3 small RNA complex) containing at least tost-1, tofu-6, ife-3, pid-3, and erh-2, which plays an essential role in embryogenesis. Within the complex interacts with tost-1. Within the pid-1 and tost-1 variants of the PETISCO complexes interacts with tofu-6 (via the RRM domain) and erh-2. In contrast to the pid-1 variant of the PETISCO complex, the tost-1 variant of the PETISCO complex plays a minor role in the biogenesis of 21U-RNAs. In terms of tissue distribution, expressed in the germline (at protein level).

The protein resides in the cytoplasm. It is found in the perinuclear region. It localises to the nucleus. Component of the pid-1 and tost-1 variants of the PETISCO complexes, which have roles in the biogenesis of a class of 21 nucleotide PIWI-interacting RNAs (piRNAs) that possess a uracil residue at the 5'-end (also called 21U-RNAs) and embryogenesis, respectively. Within the pid-1 variant of the PETISCO complex may stabilize 21U-RNA precursor molecules. Promotes the biogenesis of 21U-RNAs. Required for chromosome segregation and cell division in early embryos. The protein is Protein pid-3 of Caenorhabditis elegans.